A 245-amino-acid polypeptide reads, in one-letter code: 1-(5-phosphoribosyl)-5-[(5-phosphoribosylamino)methylideneamino] imidazole-4-carboxamide isomerase (245 aa).

Asp11 acts as the Proton acceptor in catalysis. Asp132 functions as the Proton donor in the catalytic mechanism.

This sequence belongs to the HisA/HisF family.

It localises to the cytoplasm. The catalysed reaction is 1-(5-phospho-beta-D-ribosyl)-5-[(5-phospho-beta-D-ribosylamino)methylideneamino]imidazole-4-carboxamide = 5-[(5-phospho-1-deoxy-D-ribulos-1-ylimino)methylamino]-1-(5-phospho-beta-D-ribosyl)imidazole-4-carboxamide. The protein operates within amino-acid biosynthesis; L-histidine biosynthesis; L-histidine from 5-phospho-alpha-D-ribose 1-diphosphate: step 4/9. This Bacillus licheniformis (strain ATCC 14580 / DSM 13 / JCM 2505 / CCUG 7422 / NBRC 12200 / NCIMB 9375 / NCTC 10341 / NRRL NRS-1264 / Gibson 46) protein is 1-(5-phosphoribosyl)-5-[(5-phosphoribosylamino)methylideneamino] imidazole-4-carboxamide isomerase.